Reading from the N-terminus, the 179-residue chain is Probable F-box protein At3g25550 (179 aa).

Positions 19–55 (IPNDDVLEEIIVRLPVKTLTRFQTVSKHWRHTIKSRN) constitute an F-box domain.

This chain is Probable F-box protein At3g25550, found in Arabidopsis thaliana (Mouse-ear cress).